The chain runs to 352 residues: Ion-translocating oxidoreductase complex subunit D (352 aa).

4 helical membrane-spanning segments follow: residues 20–40 (IMLL…WFFG), 42–62 (GTLF…AIVL), 69–91 (VASH…SIPP), and 123–143 (PAMI…TSWL). Thr187 carries the post-translational modification FMN phosphoryl threonine. 5 helical membrane passes run 215–235 (LAGV…VFLL), 242–262 (WHIP…GWLF), 267–287 (LASP…FFIL), 301–321 (LIFG…GGYP), and 322–342 (DGVA…DYYT).

The protein belongs to the NqrB/RnfD family. The complex is composed of six subunits: RsxA, RsxB, RsxC, RsxD, RsxE and RsxG. It depends on FMN as a cofactor.

It localises to the cell inner membrane. In terms of biological role, part of a membrane-bound complex that couples electron transfer with translocation of ions across the membrane. Required to maintain the reduced state of SoxR. This is Ion-translocating oxidoreductase complex subunit D from Salmonella enteritidis PT4 (strain P125109).